The sequence spans 243 residues: 3-deoxy-manno-octulosonate cytidylyltransferase (243 aa).

The protein belongs to the KdsB family.

The protein resides in the cytoplasm. The enzyme catalyses 3-deoxy-alpha-D-manno-oct-2-ulosonate + CTP = CMP-3-deoxy-beta-D-manno-octulosonate + diphosphate. Its pathway is nucleotide-sugar biosynthesis; CMP-3-deoxy-D-manno-octulosonate biosynthesis; CMP-3-deoxy-D-manno-octulosonate from 3-deoxy-D-manno-octulosonate and CTP: step 1/1. The protein operates within bacterial outer membrane biogenesis; lipopolysaccharide biosynthesis. Activates KDO (a required 8-carbon sugar) for incorporation into bacterial lipopolysaccharide in Gram-negative bacteria. The polypeptide is 3-deoxy-manno-octulosonate cytidylyltransferase (Helicobacter pylori (strain P12)).